The sequence spans 349 residues: Isopentenyl-diphosphate delta-isomerase (349 aa).

6-7 (RK) is a substrate binding site. Residues 62-64 (AMT), Ser-93, and Asn-122 contribute to the FMN site. Gln-152 contributes to the substrate binding site. A Mg(2+)-binding site is contributed by Glu-153. Residues Lys-184, Thr-214, 258–259 (GG), and 280–281 (AG) contribute to the FMN site.

It belongs to the IPP isomerase type 2 family. Homooctamer. Dimer of tetramers. FMN serves as cofactor. It depends on NADPH as a cofactor. The cofactor is Mg(2+).

It is found in the cytoplasm. It carries out the reaction isopentenyl diphosphate = dimethylallyl diphosphate. Its function is as follows. Involved in the biosynthesis of isoprenoids. Catalyzes the 1,3-allylic rearrangement of the homoallylic substrate isopentenyl (IPP) to its allylic isomer, dimethylallyl diphosphate (DMAPP). In Bacillus thuringiensis subsp. konkukian (strain 97-27), this protein is Isopentenyl-diphosphate delta-isomerase.